A 230-amino-acid polypeptide reads, in one-letter code: Aquaporin Z (230 aa).

Helical transmembrane passes span 9 to 29 and 35 to 55; these read AELI…VLAA and IGVL…AFAI. Residues 64–66 carry the NPA 1 motif; the sequence is NPA. 3 helical membrane passes run 83 to 103, 131 to 151, and 160 to 180; these read LPYV…IYLI, LGAG…VIMG, and GFAP…SIPV. Positions 186 to 188 match the NPA 2 motif; sequence NPA. A helical transmembrane segment spans residues 194–214; it reads ALFVGGWALQQLWLFWVAPLI.

It belongs to the MIP/aquaporin (TC 1.A.8) family. Homotetramer.

It is found in the cell inner membrane. The enzyme catalyses H2O(in) = H2O(out). Its function is as follows. Channel that permits osmotically driven movement of water in both directions. It is involved in the osmoregulation and in the maintenance of cell turgor during volume expansion in rapidly growing cells. It mediates rapid entry or exit of water in response to abrupt changes in osmolarity. This Pseudomonas putida (strain ATCC 47054 / DSM 6125 / CFBP 8728 / NCIMB 11950 / KT2440) protein is Aquaporin Z.